Here is a 166-residue protein sequence, read N- to C-terminus: Nucleotide-binding protein Acid_3194 (166 aa).

The protein belongs to the YajQ family.

Its function is as follows. Nucleotide-binding protein. This chain is Nucleotide-binding protein Acid_3194, found in Solibacter usitatus (strain Ellin6076).